Here is a 142-residue protein sequence, read N- to C-terminus: Protein archease (142 aa).

Ca(2+)-binding residues include D12 and D141.

Belongs to the archease family.

Its function is as follows. Activates the tRNA-splicing ligase complex by facilitating the enzymatic turnover of catalytic subunit RtcB. Acts by promoting the guanylylation of RtcB, a key intermediate step in tRNA ligation. Can also alter the NTP specificity of RtcB such that ATP, dGTP or ITP is used efficiently. The polypeptide is Protein archease (Thermococcus kodakarensis (strain ATCC BAA-918 / JCM 12380 / KOD1) (Pyrococcus kodakaraensis (strain KOD1))).